The following is a 225-amino-acid chain: Uracil-DNA glycosylase (225 aa).

D65 functions as the Proton acceptor in the catalytic mechanism.

Belongs to the uracil-DNA glycosylase (UDG) superfamily. UNG family.

It is found in the cytoplasm. The enzyme catalyses Hydrolyzes single-stranded DNA or mismatched double-stranded DNA and polynucleotides, releasing free uracil.. Its function is as follows. Excises uracil residues from the DNA which can arise as a result of misincorporation of dUMP residues by DNA polymerase or due to deamination of cytosine. This is Uracil-DNA glycosylase from Bacillus licheniformis (strain ATCC 14580 / DSM 13 / JCM 2505 / CCUG 7422 / NBRC 12200 / NCIMB 9375 / NCTC 10341 / NRRL NRS-1264 / Gibson 46).